An 847-amino-acid polypeptide reads, in one-letter code: Protein translocase subunit SecA (847 aa).

Residues Gln87, 105–109 (GEGKT), and Asp495 each bind ATP. Residues 828 to 847 (SSNSPSDARNRPIEHDDNAV) form a disordered region. Residues 835 to 847 (ARNRPIEHDDNAV) show a composition bias toward basic and acidic residues.

Belongs to the SecA family. Monomer and homodimer. Part of the essential Sec protein translocation apparatus which comprises SecA, SecYEG and auxiliary proteins SecDF. Other proteins may also be involved.

It localises to the cell membrane. The protein resides in the cytoplasm. The enzyme catalyses ATP + H2O + cellular proteinSide 1 = ADP + phosphate + cellular proteinSide 2.. In terms of biological role, part of the Sec protein translocase complex. Interacts with the SecYEG preprotein conducting channel. Has a central role in coupling the hydrolysis of ATP to the transfer of proteins into and across the cell membrane, serving as an ATP-driven molecular motor driving the stepwise translocation of polypeptide chains across the membrane. This Tropheryma whipplei (strain TW08/27) (Whipple's bacillus) protein is Protein translocase subunit SecA.